The following is a 522-amino-acid chain: ATP synthase subunit alpha (522 aa).

Residue 176-183 (GDRQTGKT) coordinates ATP.

It belongs to the ATPase alpha/beta chains family. In terms of assembly, F-type ATPases have 2 components, CF(1) - the catalytic core - and CF(0) - the membrane proton channel. CF(1) has five subunits: alpha(3), beta(3), gamma(1), delta(1), epsilon(1). CF(0) has four main subunits: a, b, b' and c.

The protein localises to the cell membrane. The enzyme catalyses ATP + H2O + 4 H(+)(in) = ADP + phosphate + 5 H(+)(out). Produces ATP from ADP in the presence of a proton gradient across the membrane. The alpha chain is a regulatory subunit. The protein is ATP synthase subunit alpha of Chloroflexus aggregans (strain MD-66 / DSM 9485).